The chain runs to 260 residues: 3'-5' ssDNA/RNA exonuclease TatD (260 aa).

A divalent metal cation is bound by residues E91, H127, and H152.

Belongs to the metallo-dependent hydrolases superfamily. TatD-type hydrolase family. TatD subfamily. As to quaternary structure, monomer. Mg(2+) is required as a cofactor.

The protein resides in the cytoplasm. Its function is as follows. 3'-5' exonuclease that prefers single-stranded DNA and RNA. May play a role in the H(2)O(2)-induced DNA damage repair. This chain is 3'-5' ssDNA/RNA exonuclease TatD, found in Escherichia fergusonii (strain ATCC 35469 / DSM 13698 / CCUG 18766 / IAM 14443 / JCM 21226 / LMG 7866 / NBRC 102419 / NCTC 12128 / CDC 0568-73).